The following is an 88-amino-acid chain: Small ribosomal subunit protein uS15 (88 aa).

Belongs to the universal ribosomal protein uS15 family. Part of the 30S ribosomal subunit. Forms a bridge to the 50S subunit in the 70S ribosome, contacting the 23S rRNA.

In terms of biological role, one of the primary rRNA binding proteins, it binds directly to 16S rRNA where it helps nucleate assembly of the platform of the 30S subunit by binding and bridging several RNA helices of the 16S rRNA. Functionally, forms an intersubunit bridge (bridge B4) with the 23S rRNA of the 50S subunit in the ribosome. The chain is Small ribosomal subunit protein uS15 from Flavobacterium johnsoniae (strain ATCC 17061 / DSM 2064 / JCM 8514 / BCRC 14874 / CCUG 350202 / NBRC 14942 / NCIMB 11054 / UW101) (Cytophaga johnsonae).